The primary structure comprises 339 residues: Biotin synthase (339 aa).

Positions 51-278 (SEVELATLLS…KARVRLSAGR (228 aa)) constitute a Radical SAM core domain. [4Fe-4S] cluster contacts are provided by cysteine 66, cysteine 70, and cysteine 73. Residues cysteine 110, cysteine 141, cysteine 201, and arginine 273 each contribute to the [2Fe-2S] cluster site.

It belongs to the radical SAM superfamily. Biotin synthase family. In terms of assembly, homodimer. [4Fe-4S] cluster serves as cofactor. Requires [2Fe-2S] cluster as cofactor.

The enzyme catalyses (4R,5S)-dethiobiotin + (sulfur carrier)-SH + 2 reduced [2Fe-2S]-[ferredoxin] + 2 S-adenosyl-L-methionine = (sulfur carrier)-H + biotin + 2 5'-deoxyadenosine + 2 L-methionine + 2 oxidized [2Fe-2S]-[ferredoxin]. It participates in cofactor biosynthesis; biotin biosynthesis; biotin from 7,8-diaminononanoate: step 2/2. In terms of biological role, catalyzes the conversion of dethiobiotin (DTB) to biotin by the insertion of a sulfur atom into dethiobiotin via a radical-based mechanism. In Herminiimonas arsenicoxydans, this protein is Biotin synthase.